Reading from the N-terminus, the 342-residue chain is tRNA (guanine(26)-N(2))-dimethyltransferase (342 aa).

The Trm1 methyltransferase domain maps to 1–336 (MRITEGSAVI…CPYAEVSEIL (336 aa)). Arg35, Arg60, and Glu76 together coordinate S-adenosyl-L-methionine.

This sequence belongs to the class I-like SAM-binding methyltransferase superfamily. Trm1 family.

The enzyme catalyses guanosine(26) in tRNA + 2 S-adenosyl-L-methionine = N(2)-dimethylguanosine(26) in tRNA + 2 S-adenosyl-L-homocysteine + 2 H(+). In terms of biological role, dimethylates a single guanine residue at position 26 of a number of tRNAs using S-adenosyl-L-methionine as donor of the methyl groups. In Thermoplasma volcanium (strain ATCC 51530 / DSM 4299 / JCM 9571 / NBRC 15438 / GSS1), this protein is tRNA (guanine(26)-N(2))-dimethyltransferase.